The chain runs to 95 residues: Small ribosomal subunit protein bS6 (95 aa).

Belongs to the bacterial ribosomal protein bS6 family.

Binds together with bS18 to 16S ribosomal RNA. This is Small ribosomal subunit protein bS6 from Streptococcus agalactiae serotype Ia (strain ATCC 27591 / A909 / CDC SS700).